Reading from the N-terminus, the 156-residue chain is Small ribosomal subunit protein uS7 (156 aa).

This sequence belongs to the universal ribosomal protein uS7 family. As to quaternary structure, part of the 30S ribosomal subunit. Contacts proteins S9 and S11.

Functionally, one of the primary rRNA binding proteins, it binds directly to 16S rRNA where it nucleates assembly of the head domain of the 30S subunit. Is located at the subunit interface close to the decoding center, probably blocks exit of the E-site tRNA. This chain is Small ribosomal subunit protein uS7, found in Methylococcus capsulatus (strain ATCC 33009 / NCIMB 11132 / Bath).